Reading from the N-terminus, the 151-residue chain is Neuroglobin (151 aa).

Residues 1–149 (MERPESELIR…VVQAMSRGWD (149 aa)) enclose the Globin domain. Heme b is bound by residues H64 and H96.

Belongs to the globin family. Monomer. Homodimer and homotetramer; disulfide-linked. Mainly monomeric but also detected as part of homodimers and homotetramers. Interacts with 14-3-3 proteins; regulates the phosphorylation of NGB. Could interact (ferrous form) with G-alpha(i) proteins (GTP-bound form). In terms of processing, phosphorylated during hypoxia by ERK1/ERK2. Phosphorylation regulates the heme pocket hexacoordination preventing the association of His-64 with the heme metal center. Thereby, promotes the access of dioxygen and nitrite to the heme and stimulates the nitrite reductase activity. Phosphorylation during hypoxia is stabilized by 14-3-3 proteins. As to expression, widely distributed throughout the adult brain, including cerebral cortex, hippocampus, thalamus, hypothalamus, olfactory bulb, and cerebellum.

Its subcellular location is the cytoplasm. The protein localises to the cytosol. It is found in the mitochondrion matrix. It carries out the reaction Fe(III)-heme b-[protein] + nitric oxide + H2O = Fe(II)-heme b-[protein] + nitrite + 2 H(+). Its function is as follows. Monomeric globin with a bis-histidyl six-coordinate heme-iron atom through which it can bind dioxygen, carbon monoxide and nitric oxide. Could help transport oxygen and increase its availability to the metabolically active neuronal tissues, though its low quantity in tissues as well as its high affinity for dioxygen, which may limit its oxygen-releasing ability, argue against it. The ferrous/deoxygenated form exhibits a nitrite reductase activity and it could produce nitric oxide which in turn inhibits cellular respiration in response to hypoxia. In its ferrous/deoxygenated state, it may also exhibit GDI (Guanine nucleotide Dissociation Inhibitor) activity toward heterotrimeric G-alpha proteins, thereby regulating signal transduction to facilitate neuroprotective responses in the wake of hypoxia and associated oxidative stress. The protein is Neuroglobin of Rattus norvegicus (Rat).